The following is a 38-amino-acid chain: ATP synthase subunit O, mitochondrial (38 aa).

This sequence belongs to the ATPase delta chain family. F-type ATPases have 2 components, CF(1) - the catalytic core - and CF(0) - the membrane proton channel. CF(1) has five subunits: alpha(3), beta(3), gamma(1), delta(1), epsilon(1). CF(0) has three main subunits: a, b and c.

The protein localises to the mitochondrion. It is found in the mitochondrion inner membrane. Its function is as follows. Mitochondrial membrane ATP synthase (F(1)F(0) ATP synthase or Complex V) produces ATP from ADP in the presence of a proton gradient across the membrane which is generated by electron transport complexes of the respiratory chain. F-type ATPases consist of two structural domains, F(1) - containing the extramembraneous catalytic core and F(0) - containing the membrane proton channel, linked together by a central stalk and a peripheral stalk. During catalysis, ATP synthesis in the catalytic domain of F(1) is coupled via a rotary mechanism of the central stalk subunits to proton translocation. Part of the complex F(0) domain and the peripheric stalk, which acts as a stator to hold the catalytic alpha(3)beta(3) subcomplex and subunit a/ATP6 static relative to the rotary elements. The sequence is that of ATP synthase subunit O, mitochondrial from Pisum sativum (Garden pea).